Here is a 390-residue protein sequence, read N- to C-terminus: Chorismate synthase (390 aa).

NADP(+)-binding residues include arginine 40 and arginine 46. Residues 129 to 131 (RAS), 249 to 250 (QA), glycine 294, 309 to 313 (KPIPT), and arginine 335 each bind FMN.

The protein belongs to the chorismate synthase family. As to quaternary structure, homotetramer. FMNH2 is required as a cofactor.

The enzyme catalyses 5-O-(1-carboxyvinyl)-3-phosphoshikimate = chorismate + phosphate. It functions in the pathway metabolic intermediate biosynthesis; chorismate biosynthesis; chorismate from D-erythrose 4-phosphate and phosphoenolpyruvate: step 7/7. Its function is as follows. Catalyzes the anti-1,4-elimination of the C-3 phosphate and the C-6 proR hydrogen from 5-enolpyruvylshikimate-3-phosphate (EPSP) to yield chorismate, which is the branch point compound that serves as the starting substrate for the three terminal pathways of aromatic amino acid biosynthesis. This reaction introduces a second double bond into the aromatic ring system. This chain is Chorismate synthase, found in Desulforudis audaxviator (strain MP104C).